The chain runs to 208 residues: Large ribosomal subunit protein uL3c (208 aa).

Residues threonine 129 to leucine 165 are disordered.

Belongs to the universal ribosomal protein uL3 family. In terms of assembly, part of the 50S ribosomal subunit.

It is found in the plastid. The protein resides in the chloroplast. Its function is as follows. One of the primary rRNA binding proteins, it binds directly near the 3'-end of the 23S rRNA, where it nucleates assembly of the 50S subunit. This Rhodomonas salina (Cryptomonas salina) protein is Large ribosomal subunit protein uL3c (rpl3).